The sequence spans 228 residues: PKHD-type hydroxylase XC_1340 (228 aa).

In terms of domain architecture, Fe2OG dioxygenase spans 78-180 (RIYPPLFNRY…RVASFFWIQS (103 aa)). Fe cation-binding residues include His-96, Asp-98, and His-161. Residue Arg-171 coordinates 2-oxoglutarate.

It depends on Fe(2+) as a cofactor. L-ascorbate serves as cofactor.

The protein is PKHD-type hydroxylase XC_1340 of Xanthomonas campestris pv. campestris (strain 8004).